The following is a 1690-amino-acid chain: DNA-directed RNA polymerase subunit beta' (1690 aa).

The Zn(2+) site is built by C63, C65, C78, and C81. The Mg(2+) site is built by D753, D755, and D757. The Zn(2+) site is built by C1107, C1295, C1302, and C1305.

The protein belongs to the RNA polymerase beta' chain family. As to quaternary structure, the RNAP catalytic core consists of 2 alpha, 1 beta, 1 beta' and 1 omega subunit. When a sigma factor is associated with the core the holoenzyme is formed, which can initiate transcription. Requires Mg(2+) as cofactor. The cofactor is Zn(2+).

The catalysed reaction is RNA(n) + a ribonucleoside 5'-triphosphate = RNA(n+1) + diphosphate. In terms of biological role, DNA-dependent RNA polymerase catalyzes the transcription of DNA into RNA using the four ribonucleoside triphosphates as substrates. The chain is DNA-directed RNA polymerase subunit beta' from Thermotoga maritima (strain ATCC 43589 / DSM 3109 / JCM 10099 / NBRC 100826 / MSB8).